The sequence spans 62 residues: uncharacterized protein (62 aa).

This is an uncharacterized protein from Sulfolobus islandicus filamentous virus (isolate Iceland/Hveragerdi) (SIFV).